The primary structure comprises 477 residues: Glycogen synthase (477 aa).

Lys-15 lines the ADP-alpha-D-glucose pocket.

This sequence belongs to the glycosyltransferase 1 family. Bacterial/plant glycogen synthase subfamily.

It carries out the reaction [(1-&gt;4)-alpha-D-glucosyl](n) + ADP-alpha-D-glucose = [(1-&gt;4)-alpha-D-glucosyl](n+1) + ADP + H(+). The protein operates within glycan biosynthesis; glycogen biosynthesis. Its function is as follows. Synthesizes alpha-1,4-glucan chains using ADP-glucose. The sequence is that of Glycogen synthase from Escherichia fergusonii (strain ATCC 35469 / DSM 13698 / CCUG 18766 / IAM 14443 / JCM 21226 / LMG 7866 / NBRC 102419 / NCTC 12128 / CDC 0568-73).